The primary structure comprises 295 residues: Accessory protein VasW (295 aa).

Functionally, plays an accessory role in VasX-mediated bacterial killing. The polypeptide is Accessory protein VasW (Vibrio cholerae serotype O1 (strain ATCC 39315 / El Tor Inaba N16961)).